The chain runs to 228 residues: Phosphoglycolate phosphatase (228 aa).

Asp-12 (nucleophile) is an active-site residue. Mg(2+)-binding residues include Asp-12, Asp-14, and Asp-177.

This sequence belongs to the HAD-like hydrolase superfamily. CbbY/CbbZ/Gph/YieH family. It depends on Mg(2+) as a cofactor.

It carries out the reaction 2-phosphoglycolate + H2O = glycolate + phosphate. Its pathway is organic acid metabolism; glycolate biosynthesis; glycolate from 2-phosphoglycolate: step 1/1. Its function is as follows. Specifically catalyzes the dephosphorylation of 2-phosphoglycolate. Is involved in the dissimilation of the intracellular 2-phosphoglycolate formed during the DNA repair of 3'-phosphoglycolate ends, a major class of DNA lesions induced by oxidative stress. The protein is Phosphoglycolate phosphatase of Vibrio vulnificus (strain CMCP6).